We begin with the raw amino-acid sequence, 90 residues long: Small ribosomal subunit protein bS20 (90 aa).

Residues 1-10 are compositionally biased toward polar residues; the sequence is MANHKSTQKS. The segment at 1 to 25 is disordered; it reads MANHKSTQKSIRQDQKRNLINKSRK.

It belongs to the bacterial ribosomal protein bS20 family.

Functionally, binds directly to 16S ribosomal RNA. This chain is Small ribosomal subunit protein bS20, found in Orientia tsutsugamushi (strain Ikeda) (Rickettsia tsutsugamushi).